The chain runs to 234 residues: Segregation and condensation protein A (234 aa).

Belongs to the ScpA family. In terms of assembly, component of a cohesin-like complex composed of ScpA, ScpB and the Smc homodimer, in which ScpA and ScpB bind to the head domain of Smc. The presence of the three proteins is required for the association of the complex with DNA.

The protein resides in the cytoplasm. In terms of biological role, participates in chromosomal partition during cell division. May act via the formation of a condensin-like complex containing Smc and ScpB that pull DNA away from mid-cell into both cell halves. The polypeptide is Segregation and condensation protein A (Streptococcus pyogenes serotype M6 (strain ATCC BAA-946 / MGAS10394)).